A 233-amino-acid polypeptide reads, in one-letter code: Ion-translocating oxidoreductase complex subunit E (233 aa).

Transmembrane regions (helical) follow at residues 18–38, 39–59, 69–89, 92–112, 128–148, and 182–202; these read ALVQLLGLCPLLAVSSTATNA, LGLGLATTLVLVCTNTAVSAL, IPIYVMIIASVVSTVQMLINA, FGLYQSLGIFIPLIVTNCIVI, ALDGFAMGMGATCALFVLGAL, and PFLLAMLPPGAFIGLGLLLAG.

The protein belongs to the NqrDE/RnfAE family. In terms of assembly, the complex is composed of six subunits: RnfA, RnfB, RnfC, RnfD, RnfE and RnfG.

It localises to the cell inner membrane. Its function is as follows. Part of a membrane-bound complex that couples electron transfer with translocation of ions across the membrane. The sequence is that of Ion-translocating oxidoreductase complex subunit E from Yersinia pseudotuberculosis serotype IB (strain PB1/+).